We begin with the raw amino-acid sequence, 66 residues long: Large ribosomal subunit protein uL29 (66 aa).

Belongs to the universal ribosomal protein uL29 family.

In Ruegeria sp. (strain TM1040) (Silicibacter sp.), this protein is Large ribosomal subunit protein uL29.